A 111-amino-acid polypeptide reads, in one-letter code: Guanylate cyclase activator 2B (111 aa).

An N-terminal signal peptide occupies residues Met-1–Ser-26. A propeptide spanning residues Val-27–Asp-96 is cleaved from the precursor. 3 disulfide bridges follow: Cys-67/Cys-80, Cys-100/Cys-108, and Cys-103/Cys-111.

The protein belongs to the guanylin family.

Its subcellular location is the secreted. In terms of biological role, endogenous activator of intestinal guanylate cyclase. It stimulates this enzyme through the same receptor binding region as the heat-stable enterotoxins. May be a potent physiological regulator of intestinal fluid and electrolyte transport. May be an autocrine/paracrine regulator of intestinal salt and water transport. This Cavia porcellus (Guinea pig) protein is Guanylate cyclase activator 2B (GUCA2B).